A 725-amino-acid chain; its full sequence is Polyribonucleotide nucleotidyltransferase (725 aa).

Asp487 and Asp493 together coordinate Mg(2+). One can recognise a KH domain in the interval 554–613 (PRIETMQIPTDKIREVIGTGGKVIREIVEKTGAKIDIQDTGVIKIASSDAKAIKAAYNWI). The S1 motif domain maps to 623-691 (GMIYDGTVVK…ERGKIRLSMK (69 aa)). The interval 697–725 (TGEDITEKLKAEREADRNRERQARQSAGE) is disordered. Positions 701–719 (ITEKLKAEREADRNRERQA) are enriched in basic and acidic residues.

It belongs to the polyribonucleotide nucleotidyltransferase family. Mg(2+) serves as cofactor.

Its subcellular location is the cytoplasm. It carries out the reaction RNA(n+1) + phosphate = RNA(n) + a ribonucleoside 5'-diphosphate. Its function is as follows. Involved in mRNA degradation. Catalyzes the phosphorolysis of single-stranded polyribonucleotides processively in the 3'- to 5'-direction. The sequence is that of Polyribonucleotide nucleotidyltransferase from Methylobacterium nodulans (strain LMG 21967 / CNCM I-2342 / ORS 2060).